Consider the following 251-residue polypeptide: Ditrans,polycis-undecaprenyl-diphosphate synthase ((2E,6E)-farnesyl-diphosphate specific) (251 aa).

The active site involves D21. D21 provides a ligand contact to Mg(2+). Substrate is bound by residues G22–R25, W26, H38, and S66–E68. The active-site Proton acceptor is the N69. Substrate is bound by residues W70, R72, R189, and R195–S197. Residue E208 coordinates Mg(2+).

It belongs to the UPP synthase family. Homodimer. Mg(2+) serves as cofactor.

The enzyme catalyses 8 isopentenyl diphosphate + (2E,6E)-farnesyl diphosphate = di-trans,octa-cis-undecaprenyl diphosphate + 8 diphosphate. Catalyzes the sequential condensation of isopentenyl diphosphate (IPP) with (2E,6E)-farnesyl diphosphate (E,E-FPP) to yield (2Z,6Z,10Z,14Z,18Z,22Z,26Z,30Z,34E,38E)-undecaprenyl diphosphate (di-trans,octa-cis-UPP). UPP is the precursor of glycosyl carrier lipid in the biosynthesis of bacterial cell wall polysaccharide components such as peptidoglycan and lipopolysaccharide. This chain is Ditrans,polycis-undecaprenyl-diphosphate synthase ((2E,6E)-farnesyl-diphosphate specific), found in Pseudomonas syringae pv. tomato (strain ATCC BAA-871 / DC3000).